Reading from the N-terminus, the 81-residue chain is Defensin-like protein 311 (81 aa).

A signal peptide spans 1–24; the sequence is MEKISAFFVILFLVSSCLVTMSVG. 3 cysteine pairs are disulfide-bonded: C27–C50, C33–C57, and C41–C59.

It belongs to the DEFL family.

Its subcellular location is the secreted. In Arabidopsis thaliana (Mouse-ear cress), this protein is Defensin-like protein 311.